The primary structure comprises 758 residues: Inhibitor of nuclear factor kappa-B kinase subunit alpha (758 aa).

The 287-residue stretch at 15-301 folds into the Protein kinase domain; sequence WVMKERLGTG…LNTDSKQPQC (287 aa). ATP is bound by residues 21–29 and K44; that span reads LGTGGFGHV. D145 serves as the catalytic Proton acceptor. The interval 456–477 is leucine-zipper; it reads LLRFNTNLTRYKNMMFSFSQQL. The tract at residues 741-746 is NEMO-binding; sequence QDWSWT.

It belongs to the protein kinase superfamily. Ser/Thr protein kinase family. I-kappa-B kinase subfamily. In terms of assembly, directly interacts with ikbkg/nemo.

It localises to the cytoplasm. Its subcellular location is the nucleus. The enzyme catalyses L-seryl-[I-kappa-B protein] + ATP = O-phospho-L-seryl-[I-kappa-B protein] + ADP + H(+). With respect to regulation, activated when phosphorylated and inactivated when dephosphorylated. Phosphorylates inhibitors of NF-kappa-B thus leading to the dissociation of the inhibitor/NF-kappa-B complex and ultimately the degradation of the inhibitor. Phosphorylates 'Ser-10' of histone H3 at NF-kappa-B-regulated promoters during inflammatory responses triggered by cytokines. The sequence is that of Inhibitor of nuclear factor kappa-B kinase subunit alpha (chuk) from Danio rerio (Zebrafish).